Here is a 607-residue protein sequence, read N- to C-terminus: UvrABC system protein C (607 aa).

In terms of domain architecture, GIY-YIG spans 16-94 (GRPGVYRMFD…IKEWRPPYNI (79 aa)). The UVR domain maps to 203-238 (NALSDELNATMEKAAMALDFERAAELRDQVALLRRV).

It belongs to the UvrC family. In terms of assembly, interacts with UvrB in an incision complex.

The protein resides in the cytoplasm. Functionally, the UvrABC repair system catalyzes the recognition and processing of DNA lesions. UvrC both incises the 5' and 3' sides of the lesion. The N-terminal half is responsible for the 3' incision and the C-terminal half is responsible for the 5' incision. In Pseudomonas savastanoi pv. phaseolicola (strain 1448A / Race 6) (Pseudomonas syringae pv. phaseolicola (strain 1448A / Race 6)), this protein is UvrABC system protein C.